A 249-amino-acid chain; its full sequence is Deoxyribose-phosphate aldolase (249 aa).

The active-site Proton donor/acceptor is the D94. Residue K158 is the Schiff-base intermediate with acetaldehyde of the active site. K200 acts as the Proton donor/acceptor in catalysis.

The protein belongs to the DeoC/FbaB aldolase family. DeoC type 1 subfamily.

Its subcellular location is the cytoplasm. It carries out the reaction 2-deoxy-D-ribose 5-phosphate = D-glyceraldehyde 3-phosphate + acetaldehyde. Its pathway is carbohydrate degradation; 2-deoxy-D-ribose 1-phosphate degradation; D-glyceraldehyde 3-phosphate and acetaldehyde from 2-deoxy-alpha-D-ribose 1-phosphate: step 2/2. Its function is as follows. Catalyzes a reversible aldol reaction between acetaldehyde and D-glyceraldehyde 3-phosphate to generate 2-deoxy-D-ribose 5-phosphate. In Thermoplasma volcanium (strain ATCC 51530 / DSM 4299 / JCM 9571 / NBRC 15438 / GSS1), this protein is Deoxyribose-phosphate aldolase.